A 393-amino-acid chain; its full sequence is Cyclic GMP-AMP synthase-like receptor 1 (393 aa).

Mg(2+) is bound by residues glutamate 89, aspartate 91, and aspartate 205. 89–91 (EFD) contributes to the ATP binding site. GTP contacts are provided by residues aspartate 205 and 251 to 258 (RASFYEAE). ATP contacts are provided by residues 255-258 (YEAE), lysine 276, and 289-293 (SYHIK).

Belongs to the mab-21 family. It depends on Mg(2+) as a cofactor. The cofactor is Mn(2+).

The catalysed reaction is GTP + ATP = 3',2'-cGAMP + 2 diphosphate. It carries out the reaction GTP + ATP = pppA(2'-5')pG + diphosphate. It catalyses the reaction pppA(2'-5')pG = 3',2'-cGAMP + diphosphate. Its activity is regulated as follows. The enzyme activity is specifically activated by double-stranded RNA (dsRNA). Recognizes long dsRNA (&gt;30 bp) with no preference for 5' RNA phosphorylation. Nucleotidyltransferase that catalyzes the formation of cyclic GMP-AMP (3',2'-cGAMP) from ATP and GTP and plays a key role in innate immunity. Synthesizes 3',2'-cGAMP in a two-step reaction through production of the linear intermediate pppA(2'-5')pG. Acts as a key sensor of double-stranded RNA (dsRNA), the presence of dsRNA in the cytoplasm being a danger signal that triggers the immune responses. Directly binds dsRNA longer than 35 bp, activating the nucleotidyltransferase activity, leading to synthesis of 3',2'-cGAMP, a second messenger that binds to and activates Sting, thereby triggering the antiviral immune response via activation of the NF-kappa-B transcription factor Rel (Relish). This is Cyclic GMP-AMP synthase-like receptor 1 from Drosophila simulans (Fruit fly).